The sequence spans 405 residues: Phosphopentomutase (405 aa).

D10, D303, H308, D344, H345, and H356 together coordinate Mn(2+).

Belongs to the phosphopentomutase family. Requires Mn(2+) as cofactor.

Its subcellular location is the cytoplasm. The catalysed reaction is 2-deoxy-alpha-D-ribose 1-phosphate = 2-deoxy-D-ribose 5-phosphate. It carries out the reaction alpha-D-ribose 1-phosphate = D-ribose 5-phosphate. It participates in carbohydrate degradation; 2-deoxy-D-ribose 1-phosphate degradation; D-glyceraldehyde 3-phosphate and acetaldehyde from 2-deoxy-alpha-D-ribose 1-phosphate: step 1/2. Its function is as follows. Isomerase that catalyzes the conversion of deoxy-ribose 1-phosphate (dRib-1-P) and ribose 1-phosphate (Rib-1-P) to deoxy-ribose 5-phosphate (dRib-5-P) and ribose 5-phosphate (Rib-5-P), respectively. This chain is Phosphopentomutase, found in Shewanella frigidimarina (strain NCIMB 400).